We begin with the raw amino-acid sequence, 1733 residues long: Gag-Pol polyprotein (1733 aa).

G2 carries N-myristoyl glycine; by host lipidation. A PTAP/PSAP motif motif is present at residues 109 to 112 (PTAP). The LYPX(n)L motif signature appears at 128–132 (LYPAL). Disordered regions lie at residues 139 to 218 (KPPK…LRMG), 449 to 497 (KEER…RPQL), and 511 to 549 (WAKD…PEPR). The PPXY motif signature appears at 161–164 (PPPY). Phosphoserine; by host is present on S190. The stretch at 436-476 (EEREERIRREIEEKEERRRAEDEQRERERDRRRHREMSKLL) forms a coiled coil. Basic and acidic residues-rich tracts occupy residues 449 to 464 (KEER…ERER) and 484 to 497 (RQDR…RPQL). The CCHC-type zinc finger occupies 500-517 (DQCAYCKEKGHWAKDCPK). The segment covering 526 to 535 (RPQTSLLTLG) has biased composition (low complexity). In terms of domain architecture, Peptidase A2 spans 559–629 (VTFLVDTGAQ…CPYPLLGRDL (71 aa)). The Protease; shared with dimeric partner role is filled by D564. RNA contacts are provided by Y721, D771, R773, and P787. The region spanning 739-930 (LDQGILVPCQ…KQVKYLGYLL (192 aa)) is the Reverse transcriptase domain. D807 is a binding site for Mg(2+). 2 residues coordinate RNA: N851 and P853. D881 and D882 together coordinate Mg(2+). The DNA site is built by R941, R955, R958, and F966. The RNA site is built by K1054 and K1055. W1063 lines the DNA pocket. K1082 is a binding site for RNA. R1113 lines the DNA pocket. The RNase H type-1 domain maps to 1172-1318 (PDADYTWYTD…ADQAAREAAM (147 aa)). Residue D1181 coordinates Mg(2+). S1184 and L1186 together coordinate RNA. Positions 1187, 1214, and 1216 each coordinate DNA. Mg(2+)-binding residues include E1219 and D1240. R1242 and R1266 together coordinate RNA. Positions 1310, 1453, and 1512 each coordinate Mg(2+). One can recognise an Integrase catalytic domain in the interval 1442–1600 (RGHRPGTHWE…TPYEILYGAP (159 aa)).

As to quaternary structure, homohexamer, that further associates as homomultimer. The virus core is composed of a lattice formed from hexagonal rings, each containing six capsid monomers. The protease is a homodimer, whose active site consists of two apposed aspartic acid residues. The reverse transcriptase is a monomer. In terms of assembly, interacts (via PPXY motif) with host NEDD4. Interacts (via PSAP motif) with host TSG101. Interacts (via LYPX(n)L motif) with host PDCD6IP. The reverse transcriptase is a monomer (Potential). Interacts (via RNase domains) with host release factor ETF1; this interaction is essential for translational readthrough of amber codon between viral gag and pol genes, as well as for viral replication. As to quaternary structure, homodimer. Mg(2+) is required as a cofactor. Requires Mn(2+) as cofactor. Specific enzymatic cleavages by the viral protease yield mature proteins. The protease is released by autocatalytic cleavage. The polyprotein is cleaved during and after budding, this process is termed maturation. Post-translationally, sumoylated; which is required for virus replication. In terms of processing, phosphorylated on serine residues.

The protein localises to the host cell membrane. Its subcellular location is the virion. It catalyses the reaction DNA(n) + a 2'-deoxyribonucleoside 5'-triphosphate = DNA(n+1) + diphosphate. It carries out the reaction Endonucleolytic cleavage to 5'-phosphomonoester.. Plays a role in budding and is processed by the viral protease during virion maturation outside the cell. During budding, it recruits, in a PPXY-dependent or independent manner, Nedd4-like ubiquitin ligases that conjugate ubiquitin molecules to Gag, or to Gag binding host factors. Interaction with HECT ubiquitin ligases probably link the viral protein to the host ESCRT pathway and facilitate release. Functionally, targets Gag and gag-pol polyproteins to the plasma membrane via a multipartite membrane binding signal, that includes its myristoylated N-terminus. Also mediates nuclear localization of the pre-integration complex. Its function is as follows. Forms the spherical core of the virion that encapsulates the genomic RNA-nucleocapsid complex. In terms of biological role, involved in the packaging and encapsidation of two copies of the genome. Binds with high affinity to conserved UCUG elements within the packaging signal, located near the 5'-end of the genome. This binding is dependent on genome dimerization. Acts as a nucleic acid chaperone which is involved in rearrangement of nucleic acid secondary structures during gRNA retrotranscription. The aspartyl protease mediates proteolytic cleavages of Gag and Gag-Pol polyproteins during or shortly after the release of the virion from the plasma membrane. Cleavages take place as an ordered, step-wise cascade to yield mature proteins. This process is called maturation. Displays maximal activity during the budding process just prior to particle release from the cell. Functionally, RT is a multifunctional enzyme that converts the viral dimeric RNA genome into dsDNA in the cytoplasm, shortly after virus entry into the cell. This enzyme displays a DNA polymerase activity that can copy either DNA or RNA templates, and a ribonuclease H (RNase H) activity that cleaves the RNA strand of RNA-DNA heteroduplexes in a partially processive 3' to 5' endonucleasic mode. Conversion of viral genomic RNA into dsDNA requires many steps. A tRNA binds to the primer-binding site (PBS) situated at the 5' end of the viral RNA. RT uses the 3' end of the tRNA primer to perform a short round of RNA-dependent minus-strand DNA synthesis. The reading proceeds through the U5 region and ends after the repeated (R) region which is present at both ends of viral RNA. The portion of the RNA-DNA heteroduplex is digested by the RNase H, resulting in a ssDNA product attached to the tRNA primer. This ssDNA/tRNA hybridizes with the identical R region situated at the 3' end of viral RNA. This template exchange, known as minus-strand DNA strong stop transfer, can be either intra- or intermolecular. RT uses the 3' end of this newly synthesized short ssDNA to perform the RNA-dependent minus-strand DNA synthesis of the whole template. RNase H digests the RNA template except for a polypurine tract (PPT) situated at the 5' end of the genome. It is not clear if both polymerase and RNase H activities are simultaneous. RNase H probably can proceed both in a polymerase-dependent (RNA cut into small fragments by the same RT performing DNA synthesis) and a polymerase-independent mode (cleavage of remaining RNA fragments by free RTs). Secondly, RT performs DNA-directed plus-strand DNA synthesis using the PPT that has not been removed by RNase H as primers. PPT and tRNA primers are then removed by RNase H. The 3' and 5' ssDNA PBS regions hybridize to form a circular dsDNA intermediate. Strand displacement synthesis by RT to the PBS and PPT ends produces a blunt ended, linear dsDNA copy of the viral genome that includes long terminal repeats (LTRs) at both ends. Its function is as follows. Catalyzes viral DNA integration into the host chromosome, by performing a series of DNA cutting and joining reactions. This enzyme activity takes place after virion entry into a cell and reverse transcription of the RNA genome in dsDNA. The first step in the integration process is 3' processing. This step requires a complex comprising the viral genome, matrix protein and integrase. This complex is called the pre-integration complex (PIC). The integrase protein removes 2 nucleotides from each 3' end of the viral DNA, leaving recessed CA OH's at the 3' ends. In the second step that requires cell division, the PIC enters cell nucleus. In the third step, termed strand transfer, the integrase protein joins the previously processed 3' ends to the 5' ends of strands of target cellular DNA at the site of integration. The last step is viral DNA integration into host chromosome. The protein is Gag-Pol polyprotein (gag-pol) of Homo sapiens (Human).